The sequence spans 112 residues: MYWEFFDCVIFYYHKMEYSEKKEKIFETAEKFGMDFIDLQEKCNFWNQITLTGRRECKEVKKDFMKDFLSMAKNSVDFIEQQAHQQQINQHRQSHNRQTIVRDGNTIDCIMM.

This is an uncharacterized protein from Acanthamoeba polyphaga mimivirus (APMV).